Here is a 108-residue protein sequence, read N- to C-terminus: Transcriptional activator HlyU (108 aa).

In terms of domain architecture, HTH arsR-type spans Glu13–Asn107. The segment at residues Val47–Ala66 is a DNA-binding region (H-T-H motif).

In terms of biological role, up-regulates the expression of the hemolysin gene, hlyA, and may promote expression of other virulence determinants in vivo. It may have both positive and negative regulator activities. This chain is Transcriptional activator HlyU (hlyU), found in Vibrio cholerae serotype O1 (strain ATCC 39315 / El Tor Inaba N16961).